The following is a 483-amino-acid chain: Cobyric acid synthase (483 aa).

The GATase cobBQ-type domain maps to 251–438 (ALIVAVPMLP…LHGVFSADRF (188 aa)). Cys333 (nucleophile) is an active-site residue. His430 is a catalytic residue.

This sequence belongs to the CobB/CobQ family. CobQ subfamily.

It participates in cofactor biosynthesis; adenosylcobalamin biosynthesis. Its function is as follows. Catalyzes amidations at positions B, D, E, and G on adenosylcobyrinic A,C-diamide. NH(2) groups are provided by glutamine, and one molecule of ATP is hydrogenolyzed for each amidation. The sequence is that of Cobyric acid synthase from Brucella suis biovar 1 (strain 1330).